The chain runs to 410 residues: Lipoyl synthase, mitochondrial (410 aa).

Positions 125, 130, 136, 157, 161, 164, and 373 each coordinate [4Fe-4S] cluster. One can recognise a Radical SAM core domain in the interval 140-362 (SDEEGTATAT…EKEAMDMGFL (223 aa)).

This sequence belongs to the radical SAM superfamily. Lipoyl synthase family. Requires [4Fe-4S] cluster as cofactor.

The protein resides in the mitochondrion. The enzyme catalyses [[Fe-S] cluster scaffold protein carrying a second [4Fe-4S](2+) cluster] + N(6)-octanoyl-L-lysyl-[protein] + 2 oxidized [2Fe-2S]-[ferredoxin] + 2 S-adenosyl-L-methionine + 4 H(+) = [[Fe-S] cluster scaffold protein] + N(6)-[(R)-dihydrolipoyl]-L-lysyl-[protein] + 4 Fe(3+) + 2 hydrogen sulfide + 2 5'-deoxyadenosine + 2 L-methionine + 2 reduced [2Fe-2S]-[ferredoxin]. Its pathway is protein modification; protein lipoylation via endogenous pathway; protein N(6)-(lipoyl)lysine from octanoyl-[acyl-carrier-protein]: step 2/2. Catalyzes the radical-mediated insertion of two sulfur atoms into the C-6 and C-8 positions of the octanoyl moiety bound to the lipoyl domains of lipoate-dependent enzymes, thereby converting the octanoylated domains into lipoylated derivatives. The protein is Lipoyl synthase, mitochondrial of Leishmania major.